Here is a 342-residue protein sequence, read N- to C-terminus: tRNA N6-adenosine threonylcarbamoyltransferase (342 aa).

H111 and H115 together coordinate Fe cation. Residues 134–138 (LVSGG), D167, G180, and N272 contribute to the substrate site. D300 provides a ligand contact to Fe cation.

The protein belongs to the KAE1 / TsaD family. Fe(2+) serves as cofactor.

The protein resides in the cytoplasm. The catalysed reaction is L-threonylcarbamoyladenylate + adenosine(37) in tRNA = N(6)-L-threonylcarbamoyladenosine(37) in tRNA + AMP + H(+). Required for the formation of a threonylcarbamoyl group on adenosine at position 37 (t(6)A37) in tRNAs that read codons beginning with adenine. Is involved in the transfer of the threonylcarbamoyl moiety of threonylcarbamoyl-AMP (TC-AMP) to the N6 group of A37, together with TsaE and TsaB. TsaD likely plays a direct catalytic role in this reaction. This is tRNA N6-adenosine threonylcarbamoyltransferase from Aromatoleum aromaticum (strain DSM 19018 / LMG 30748 / EbN1) (Azoarcus sp. (strain EbN1)).